We begin with the raw amino-acid sequence, 607 residues long: Elongation factor 4 (607 aa).

One can recognise a tr-type G domain in the interval 11-193; sequence SKIRNFSIIA…QIVEKVPAPT (183 aa). GTP contacts are provided by residues 23–28 and 140–143; these read DHGKST and NKID.

This sequence belongs to the TRAFAC class translation factor GTPase superfamily. Classic translation factor GTPase family. LepA subfamily.

The protein resides in the cell membrane. It catalyses the reaction GTP + H2O = GDP + phosphate + H(+). In terms of biological role, required for accurate and efficient protein synthesis under certain stress conditions. May act as a fidelity factor of the translation reaction, by catalyzing a one-codon backward translocation of tRNAs on improperly translocated ribosomes. Back-translocation proceeds from a post-translocation (POST) complex to a pre-translocation (PRE) complex, thus giving elongation factor G a second chance to translocate the tRNAs correctly. Binds to ribosomes in a GTP-dependent manner. The sequence is that of Elongation factor 4 from Bacillus cereus (strain AH820).